The chain runs to 1189 residues: Disabled homolog 2-interacting protein (1189 aa).

The interval 1–75 is disordered; the sequence is MSAGGNARKS…EPSASTPFRV (75 aa). Residues 20–38 are compositionally biased toward basic residues; the sequence is LLRRPRLQRQRSRSRSRTR. Over residues 39–49 the composition is skewed to basic and acidic residues; it reads PARESPQERPG. The span at 59–73 shows a compositional bias: polar residues; the sequence is SEKNPSMEPSASTPF. Residues 101–202 enclose the PH domain; it reads SFRHILPGFR…WMENLRRAVH (102 aa). Residues 193-311 enclose the C2 domain; the sequence is WMENLRRAVH…AGRQFVEKWY (119 aa). Positions 387–595 constitute a Ras-GAP domain; it reads GKVKDFLTDL…TNMQRFLLEI (209 aa). The tract at residues 646 to 943 is necessary for interaction with AKT1; it reads LRDVHTALST…RTPPTLLSTL (298 aa). Residues 653–668 are compositionally biased toward polar residues; it reads LSTPGSGQLPGTNDLA. Disordered regions lie at residues 653–679 and 715–738; these read LSTPGSGQLPGTNDLASTPGSGSSSVS and RSSGVQPSPARSSSYSEANEPDLQ. The segment covering 669 to 679 has biased composition (low complexity); it reads STPGSGSSSVS. Residues 715–731 show a composition bias toward polar residues; the sequence is RSSGVQPSPARSSSYSE. Ser-728 carries the post-translational modification Phosphoserine; by MAP3K5 and RIPK1. At Ser-747 the chain carries Phosphoserine. Disordered stretches follow at residues 804–823, 843–865, 895–998, 1015–1034, and 1163–1189; these read VPTPTTPGTSEGAPGRPQLL, PRGLGDSGSEGHSSLSSHSNSEE, SLTE…SPNA, EDEGLGPDPPHRDRLRSKEE, and ARNGVSPTNPTKLQITENGEFRNSSNC. Residues 852-865 show a composition bias toward low complexity; it reads EGHSSLSSHSNSEE. The span at 919-931 shows a compositional bias: pro residues; it reads QPPPPPPPPPPAP. Composition is skewed to polar residues over residues 939 to 955 and 967 to 976; these read LLSTLQYPRPSSGTLAS and LRQQSSSSKG. 2 positions are modified to phosphoserine: Ser-978 and Ser-995. Basic and acidic residues predominate over residues 1023–1034; the sequence is PPHRDRLRSKEE. The stretch at 1025–1159 forms a coiled coil; it reads HRDRLRSKEE…SALTQLKERY (135 aa).

On plasma membrane, exists in an inactive form complexed with TNFR1; in response to TNF-alpha, dissociates from TNFR1 complex, translocates to cytoplasm and forms part of an intracellular signaling complex comprising TRADD, RIPK1, TRAF2 and MAP3K5. Interacts with DAB1. Part of a cytoplasmic complex made of HIPK1, DAB2IP and MAP3K5 in response to TNF-alpha; this complex formation promotes MAP3K5-JNK activation and subsequent apoptosis. Interacts (via N-terminal domain) with JAK2; the interaction occurs in a IFNG/IFN-gamma-dependent manner and inhibits JAK2 autophosphorylation activity. Interacts (via C2 domain) with GSK3B; the interaction stimulates GSK3B kinase activation. Interacts (via C2 domain) with PPP2CA. Interacts (via proline-rich motif) with a regulatory p85 subunit (via SH3 domain) of the PI3K complex; the interaction inhibits the PI3K-AKT complex activity in a TNF-alpha-dependent manner in prostate cancer (PCa) cells. Interacts with AKT1; the interaction is increased in a TNF-alpha-induced manner. Interacts (via C2 domain and active form preferentially) with KDR/VEGFR2 (tyrosine-phosphorylated active form preferentially); the interaction occurs at the late phase of VEGFA response and inhibits KDR/VEGFR2 activity. Interacts (via N-terminus C2 domain) with MAP3K5 ('Ser-966' dephosphorylated form preferentially); the interaction occurs in a TNF-alpha-induced manner. Interacts (via Ras-GAP domain) with the catalytic subunit of protein phosphatase PP2A; the interaction occurs in resting endothelial cells, is further enhanced by TNF-alpha stimulation and is required to bridge PP2A to MAP3K5. Interacts (via C-terminus PER domain) with TRAF2 (via zinc fingers); the interaction occurs in a TNF-alpha-dependent manner. Interacts with 14-3-3 proteins; the interaction occurs in a TNF-alpha-dependent manner. Interacts (via Ras-GAP domain) with RIPK1 (via kinase domain); the interaction occurs in a TNF-alpha-dependent manner. Interacts (via PH domain) with ERN1. Interacts with TRAF2. Interacts (via NPXY motif) with DAB2 (via PID domain). Interacts with RAB40C; acts as a GAP for RAB40C. In terms of processing, in response to TNF-alpha-induction, phosphorylated at Ser-728; phosphorylation leads to a conformational change, and thus, increases its association with 14-3-3 proteins, MAP3K5, RIPK1 and TRAF2 in endothelial cells; also stimulates regulatory p85 subunit sequestring and PI3K-p85 complex activity inhibition. As to expression, expressed in vascular endothelium of muscle and aorta, in smooth muscle cells of aorta and epithelial cells of lung. Expressed throughout the brain, including olfactory bulb, hypothalamus, cerebellum and cerebral cortex. Expressed in the soma and processes of neurons in a variety of brain structures, including the developing cerebral cortex, CA1 pyramidal neurons and Purkinje cells. Poorly expressed in medulloblastoma cells compared to cerebellar precursor proliferating progenitor cells (at protein level). Highly expressed in the brain, salivary gland, and testis; moderate expression in kidney and heart. Low expression in the lung, seminal vesicle, ventral prostate, epididymis, liver, and bladder. Very low expression in the coagulation gland and skeleton muscles. Lowest expression seen in spleen.

The protein resides in the cytoplasm. Its subcellular location is the cell membrane. The protein localises to the membrane. It is found in the cell projection. It localises to the dendrite. Its function is as follows. Functions as a scaffold protein implicated in the regulation of a large spectrum of both general and specialized signaling pathways. Involved in several processes such as innate immune response, inflammation and cell growth inhibition, apoptosis, cell survival, angiogenesis, cell migration and maturation. Also plays a role in cell cycle checkpoint control; reduces G1 phase cyclin levels resulting in G0/G1 cell cycle arrest. Mediates signal transduction by receptor-mediated inflammatory signals, such as the tumor necrosis factor (TNF), interferon (IFN) or lipopolysaccharide (LPS). Modulates the balance between phosphatidylinositol 3-kinase (PI3K)-AKT-mediated cell survival and apoptosis stimulated kinase (MAP3K5)-JNK signaling pathways; sequesters both AKT1 and MAP3K5 and counterbalances the activity of each kinase by modulating their phosphorylation status in response to pro-inflammatory stimuli. Acts as a regulator of the endoplasmic reticulum (ER) unfolded protein response (UPR) pathway; specifically involved in transduction of the ER stress-response to the JNK cascade through ERN1. Mediates TNF-alpha-induced apoptosis activation by facilitating dissociation of inhibitor 14-3-3 from MAP3K5; recruits the PP2A phosphatase complex which dephosphorylates MAP3K5 on 'Ser-966', leading to the dissociation of 13-3-3 proteins and activation of the MAP3K5-JNK signaling pathway in endothelial cells. Also mediates TNF/TRAF2-induced MAP3K5-JNK activation, while it inhibits CHUK-NF-kappa-B signaling. Acts a negative regulator in the IFN-gamma-mediated JAK-STAT signaling cascade by inhibiting smooth muscle cell (VSMCs) proliferation and intimal expansion, and thus, prevents graft arteriosclerosis (GA). Acts as a GTPase-activating protein (GAP) for the ADP ribosylation factor 6 (ARF6) and Ras. Promotes hydrolysis of the ARF6-bound GTP and thus, negatively regulates phosphatidylinositol 4,5-bisphosphate (PIP2)-dependent TLR4-TIRAP-MyD88 and NF-kappa-B signaling pathways in endothelial cells in response to lipopolysaccharides (LPS). Binds specifically to phosphatidylinositol 4-phosphate (PtdIns4P) and phosphatidylinositol 3-phosphate (PtdIns3P). In response to vascular endothelial growth factor (VEGFA), acts as a negative regulator of the VEGFR2-PI3K-mediated angiogenic signaling pathway by inhibiting endothelial cell migration and tube formation. In the developing brain, promotes both the transition from the multipolar to the bipolar stage and the radial migration of cortical neurons from the ventricular zone toward the superficial layer of the neocortex in a glial-dependent locomotion process. Probable downstream effector of the Reelin signaling pathway; promotes Purkinje cell (PC) dendrites development and formation of cerebellar synapses. Also functions as a tumor suppressor protein in prostate cancer progression; prevents cell proliferation and epithelial-to-mesenchymal transition (EMT) through activation of the glycogen synthase kinase-3 beta (GSK3B)-induced beta-catenin and inhibition of PI3K-AKT and Ras-MAPK survival downstream signaling cascades, respectively. This Mus musculus (Mouse) protein is Disabled homolog 2-interacting protein (Dab2ip).